The primary structure comprises 487 residues: Argininosuccinate lyase (487 aa).

It belongs to the lyase 1 family. Argininosuccinate lyase subfamily.

The protein localises to the cytoplasm. The catalysed reaction is 2-(N(omega)-L-arginino)succinate = fumarate + L-arginine. It participates in amino-acid biosynthesis; L-arginine biosynthesis; L-arginine from L-ornithine and carbamoyl phosphate: step 3/3. The polypeptide is Argininosuccinate lyase (Methanococcus aeolicus (strain ATCC BAA-1280 / DSM 17508 / OCM 812 / Nankai-3)).